A 32-amino-acid chain; its full sequence is Natriuretic peptide Coa_NP2 (32 aa).

Cys-8 and Cys-24 are oxidised to a cystine.

It belongs to the natriuretic peptide family. Snake NP subfamily. As to expression, expressed by the venom gland.

It is found in the secreted. Its function is as follows. Snake venom natriuretic peptide that exhibits hypotensive and vasorelaxant effects. Produces a dose-dependent hypotension in rats, followed by significant increases in concentrations of markers of nitric oxide (NO) formation measured in the plasma and vasorelaxation in a thoracic aortic ring bath. The peptide may exert its hypotensive action, at least in part, through stimulation of NO production. The vasorelaxant effect is endothelium-dependent and does not appear to be mediated by the natriuretic peptide receptor-A, as its action is not modified by isatin (a potent NPR1 antagonist). May act by activating the natriuretic peptide receptor-B (NPR2). This Crotalus lutosus abyssus (Grand Canyon rattlesnake) protein is Natriuretic peptide Coa_NP2.